The sequence spans 320 residues: UPF0053 protein in cps region (320 aa).

The chain crosses the membrane as a helical span at residues 4 to 24 (CLSFLLMIGFSLIAEGFSFII). 2 CBS domains span residues 121–183 (MTSR…PLDL) and 186–244 (LVRQ…PNEV).

Belongs to the UPF0053 family.

The protein resides in the cell membrane. In Klebsiella pneumoniae, this protein is UPF0053 protein in cps region.